Consider the following 302-residue polypeptide: tRNA dimethylallyltransferase (302 aa).

Residue 10 to 17 participates in ATP binding; that stretch reads GPTATGKS. Residue 12 to 17 coordinates substrate; it reads TATGKS. Residues 35 to 38 are interaction with substrate tRNA; the sequence is DSRQ.

The protein belongs to the IPP transferase family. Monomer. The cofactor is Mg(2+).

It carries out the reaction adenosine(37) in tRNA + dimethylallyl diphosphate = N(6)-dimethylallyladenosine(37) in tRNA + diphosphate. Functionally, catalyzes the transfer of a dimethylallyl group onto the adenine at position 37 in tRNAs that read codons beginning with uridine, leading to the formation of N6-(dimethylallyl)adenosine (i(6)A). The chain is tRNA dimethylallyltransferase from Acaryochloris marina (strain MBIC 11017).